Consider the following 243-residue polypeptide: UDP-2,3-diacylglucosamine hydrolase (243 aa).

The Mn(2+) site is built by aspartate 9, histidine 11, aspartate 42, asparagine 79, and histidine 114. 79 to 80 (NR) lines the substrate pocket. Positions 122, 160, 164, and 195 each coordinate substrate. 2 residues coordinate Mn(2+): histidine 195 and histidine 197.

It belongs to the LpxH family. Mn(2+) is required as a cofactor.

It is found in the cell inner membrane. The catalysed reaction is UDP-2-N,3-O-bis[(3R)-3-hydroxytetradecanoyl]-alpha-D-glucosamine + H2O = 2-N,3-O-bis[(3R)-3-hydroxytetradecanoyl]-alpha-D-glucosaminyl 1-phosphate + UMP + 2 H(+). It functions in the pathway glycolipid biosynthesis; lipid IV(A) biosynthesis; lipid IV(A) from (3R)-3-hydroxytetradecanoyl-[acyl-carrier-protein] and UDP-N-acetyl-alpha-D-glucosamine: step 4/6. Hydrolyzes the pyrophosphate bond of UDP-2,3-diacylglucosamine to yield 2,3-diacylglucosamine 1-phosphate (lipid X) and UMP by catalyzing the attack of water at the alpha-P atom. Involved in the biosynthesis of lipid A, a phosphorylated glycolipid that anchors the lipopolysaccharide to the outer membrane of the cell. In Coxiella burnetii (strain Dugway 5J108-111), this protein is UDP-2,3-diacylglucosamine hydrolase.